A 768-amino-acid polypeptide reads, in one-letter code: Mitochondrial 15S rRNA processing factor CCM1 (768 aa).

Residues 1-90 (MIRLIRWNNV…RSFTKVIAQH (90 aa)) constitute a mitochondrion transit peptide. Disordered stretches follow at residues 28–65 (NKRKRRIPPSKPRSSNRKDGDIEPYRMTDQNQTPNTGS) and 90–114 (HLKPEQENDSLTSAEKPDTSQLPPI). The span at 43-53 (NRKDGDIEPYR) shows a compositional bias: basic and acidic residues. The segment covering 55 to 65 (TDQNQTPNTGS) has biased composition (polar residues). 5 PPR repeats span residues 274-308 (KIDHYETMILAYVKNNHMEKIDGILAQMKKKNIEI), 309-344 (SKMIYTSIVRGYIFYQKDHQRALDTFDSMKFLSQKT), 347-381 (DEKVYTDVIVSCVMHREIERALDLYYELKDKGMNV), 382-417 (NQNLLSTLAKGCSRSKQFKTQAWNFLFQVYDHGWVP), and 418-452 (NLQTYEHMLYIAARDGDVELTRVLFYKMLQTNSVT). The segment covering 583-596 (IEPRQDEPTEKATT) has biased composition (basic and acidic residues). The interval 583 to 609 (IEPRQDEPTEKATTTEEQNASSETDNN) is disordered. Positions 597–609 (TEEQNASSETDNN) are enriched in polar residues. One copy of the PPR 6 repeat lies at 634 to 664 (DSYLYNLAIKAAGKFKNYGFAQEILHERGQF).

Belongs to the CCM1 family. As to quaternary structure, binds to mitochondrial small subunit 15S rRNA.

Its subcellular location is the mitochondrion. In terms of biological role, regulates mitochondrial small subunit maturation by controlling 15S rRNA 5'-end processing. Localizes to the 5' precursor of the 15S rRNA in a position that is subsequently occupied by mS47 in the mature yeast mtSSU. Uses structure and sequence-specific RNA recognition, binding to a single-stranded region of the precursor and specifically recognizing bases -6 to -1. The exchange of Ccm1 for mS47 is coupled to the irreversible removal of precursor rRNA that is accompanied by conformational changes of the mitoribosomal proteins uS5m and mS26. These conformational changes signal completion of 5'-end rRNA processing through protection of the mature 5'-end of the 15S rRNA and stabilization of mS47. The removal of the 5' precursor together with the dissociation of Ccm1 may be catalyzed by the 5'-3' exoribonuclease Pet127. Involved in the specific removal of group I introns in mitochondrial encoded transcripts. This chain is Mitochondrial 15S rRNA processing factor CCM1 (CCM1), found in Candida albicans (strain SC5314 / ATCC MYA-2876) (Yeast).